The sequence spans 345 residues: Mariner Mos1 transposase (345 aa).

Residues 1–112 (MSSFVPNKEQ…VSNRLREMGK (112 aa)) form a DNA-binding region. DNA-binding regions (H-T-H motif) lie at residues 24-55 (TAAESHRMLVEAFGEQVPTVKKCERWFQRFKS) and 89-110 (QKQLAEQLEVSQQAVSNRLREM). The segment at 113 to 125 (IQKVGRWVPHELN) is linker. Residues 126–345 (ERQMERRKNT…CVASDGKYLE (220 aa)) are catalytic. Residues Asp156, Asp249, and Asp284 each coordinate Mg(2+).

In terms of assembly, homodimer. The complex has a trans arrangement, with each transposon end recognized by the DNA binding region of one transposase monomer and by the active site of the other monomer. The cofactor is Mg(2+). Mn(2+) serves as cofactor.

It is found in the nucleus. Functionally, mediates transposition of transposon Mos1 by a 'cut and paste' mechanism. Transposases are sequence-specific nucleases and strand transferases that catalyze transposition through an ordered series of events: sequence-specific binding of transposase to the terminal inverted repeats (IR) present at each end of the transposon, pairing of the transposon IRs in a paired-end complex (PEC), cleavage of one or both DNA strands at each transposon end, capture of target DNA, and strand transfer to insert the transposon at a new site. This chain is Mariner Mos1 transposase (mariner\T), found in Drosophila mauritiana (Fruit fly).